The sequence spans 156 residues: MDITLTIFAQALAFAGLIWIVATKIWPPLLQAIEERQQKIAEGLAAADRSQKDLAQAQEKVNEVLKDARTKANEIIDQAHARANQIIEAAKLEAIAEANRQKELAQTEIDASATRAREELRKQVSVLAVSGAEKLLKREIDANAHKALLDELAAEI.

A helical membrane pass occupies residues 3–23 (ITLTIFAQALAFAGLIWIVAT).

The protein belongs to the ATPase B chain family. F-type ATPases have 2 components, F(1) - the catalytic core - and F(0) - the membrane proton channel. F(1) has five subunits: alpha(3), beta(3), gamma(1), delta(1), epsilon(1). F(0) has three main subunits: a(1), b(2) and c(10-14). The alpha and beta chains form an alternating ring which encloses part of the gamma chain. F(1) is attached to F(0) by a central stalk formed by the gamma and epsilon chains, while a peripheral stalk is formed by the delta and b chains.

The protein localises to the cell inner membrane. In terms of biological role, f(1)F(0) ATP synthase produces ATP from ADP in the presence of a proton or sodium gradient. F-type ATPases consist of two structural domains, F(1) containing the extramembraneous catalytic core and F(0) containing the membrane proton channel, linked together by a central stalk and a peripheral stalk. During catalysis, ATP synthesis in the catalytic domain of F(1) is coupled via a rotary mechanism of the central stalk subunits to proton translocation. Component of the F(0) channel, it forms part of the peripheral stalk, linking F(1) to F(0). The sequence is that of ATP synthase subunit b from Xanthomonas oryzae pv. oryzae (strain MAFF 311018).